A 438-amino-acid chain; its full sequence is Lipoyl synthase, mitochondrial (438 aa).

The N-terminal 31 residues, 1 to 31, are a transit peptide targeting the mitochondrion; the sequence is MAASARGLRTLQSAHSSTTVPRLQLAVSRCY. The span at 34–57 shows a compositional bias: low complexity; the sequence is TTSPDPPITNSSNSSNSSNSTPTP. Residues 34-58 are disordered; that stretch reads TTSPDPPITNSSNSSNSSNSTPTPK. Residues cysteine 148, cysteine 153, cysteine 159, cysteine 179, cysteine 183, cysteine 186, and serine 394 each coordinate [4Fe-4S] cluster. The Radical SAM core domain occupies 162-383; sequence GSSKSAATAT…KERALEMGFL (222 aa).

It belongs to the radical SAM superfamily. Lipoyl synthase family. It depends on [4Fe-4S] cluster as a cofactor.

The protein resides in the mitochondrion. It catalyses the reaction [[Fe-S] cluster scaffold protein carrying a second [4Fe-4S](2+) cluster] + N(6)-octanoyl-L-lysyl-[protein] + 2 oxidized [2Fe-2S]-[ferredoxin] + 2 S-adenosyl-L-methionine + 4 H(+) = [[Fe-S] cluster scaffold protein] + N(6)-[(R)-dihydrolipoyl]-L-lysyl-[protein] + 4 Fe(3+) + 2 hydrogen sulfide + 2 5'-deoxyadenosine + 2 L-methionine + 2 reduced [2Fe-2S]-[ferredoxin]. Its pathway is protein modification; protein lipoylation via endogenous pathway; protein N(6)-(lipoyl)lysine from octanoyl-[acyl-carrier-protein]: step 2/2. Catalyzes the radical-mediated insertion of two sulfur atoms into the C-6 and C-8 positions of the octanoyl moiety bound to the lipoyl domains of lipoate-dependent enzymes, thereby converting the octanoylated domains into lipoylated derivatives. This is Lipoyl synthase, mitochondrial from Paracoccidioides brasiliensis (strain Pb18).